A 281-amino-acid polypeptide reads, in one-letter code: Transcription factor LBX1 (281 aa).

A compositionally biased stretch (basic and acidic residues) spans 1–20; the sequence is MTSKEDGKAAPGEERRRSPL. The segment at 1 to 35 is disordered; that stretch reads MTSKEDGKAAPGEERRRSPLDHLPPPANSNKPLTP. The homeobox DNA-binding region spans 125-184; it reads RRKSRTAFTNHQIYELEKRFLYQKYLSPADRDQIAQQLGLTNAQVITWFQNRRAKLKRDL. Positions 214–281 are disordered; the sequence is NSEATAGGGG…EEDEEIDVDD (68 aa). Positions 253-267 are enriched in polar residues; it reads SPASPLTDQPASSQD. Acidic residues predominate over residues 268 to 281; sequence CSEDEEDEEIDVDD.

Interacts with SKOR1 which acts as a transcriptional corepressor.

The protein localises to the nucleus. Functionally, transcription factor required for the development of GABAergic interneurons in the dorsal horn of the spinal cord and migration and further development of hypaxial muscle precursor cells for limb muscles, diaphragm and hypoglossal cord. This is Transcription factor LBX1 (LBX1) from Homo sapiens (Human).